We begin with the raw amino-acid sequence, 93 residues long: Small ribosomal subunit protein uS19 (93 aa).

Belongs to the universal ribosomal protein uS19 family.

Its function is as follows. Protein S19 forms a complex with S13 that binds strongly to the 16S ribosomal RNA. The protein is Small ribosomal subunit protein uS19 of Streptococcus gordonii (strain Challis / ATCC 35105 / BCRC 15272 / CH1 / DL1 / V288).